The primary structure comprises 1080 residues: Presequence protease 2, chloroplastic/mitochondrial (1080 aa).

A chloroplast and mitochondrion-targeting transit peptide spans 1–84 (MLRSLTCSST…NGQFSRLSIR (84 aa)). Residue His161 coordinates Zn(2+). The Proton acceptor role is filled by Glu164. His165 is a Zn(2+) binding site. Glu239 is a catalytic residue. Glu261 contributes to the Zn(2+) binding site. Arg704 serves as a coordination point for Mg(2+).

Belongs to the peptidase M16 family. PreP subfamily. In terms of assembly, homodimer. Zn(2+) is required as a cofactor. It depends on Mg(2+) as a cofactor. As to expression, expressed in leaves, flowers and roots, but not detected in siliques and shoots.

The protein resides in the plastid. It localises to the chloroplast stroma. It is found in the mitochondrion matrix. Completely inhibited by the metal chelator orthophenanthroline. In terms of biological role, ATP-independent protease that degrades both mitochondrial and chloroplastic transit peptides after their cleavage. Also degrades other unstructured peptides. Specific for peptides in the range of 10 to 65 residues. Shows a preference for cleavage after small polar residues and before basic residues, but without any positional preference. The polypeptide is Presequence protease 2, chloroplastic/mitochondrial (PREP2) (Arabidopsis thaliana (Mouse-ear cress)).